We begin with the raw amino-acid sequence, 214 residues long: Adenylate kinase (214 aa).

Position 10-15 (10-15 (GAGKGT)) interacts with ATP. The tract at residues 30 to 59 (STGDMLRAAVKAGTPLGLEAKKVMDAGQLV) is NMP. AMP is bound by residues T31, R36, 57 to 59 (QLV), 85 to 88 (GFPR), and Q92. The LID stretch occupies residues 122–159 (GRRVHSGSGRVYHVVFNPPKVEGKDDVTGEDLSIRPDD). ATP-binding positions include R123 and 132 to 133 (VY). Residues R156 and R167 each coordinate AMP. Q200 serves as a coordination point for ATP.

It belongs to the adenylate kinase family. In terms of assembly, monomer.

Its subcellular location is the cytoplasm. It carries out the reaction AMP + ATP = 2 ADP. It functions in the pathway purine metabolism; AMP biosynthesis via salvage pathway; AMP from ADP: step 1/1. Its function is as follows. Catalyzes the reversible transfer of the terminal phosphate group between ATP and AMP. Plays an important role in cellular energy homeostasis and in adenine nucleotide metabolism. This Shewanella denitrificans (strain OS217 / ATCC BAA-1090 / DSM 15013) protein is Adenylate kinase.